We begin with the raw amino-acid sequence, 244 residues long: PHD finger protein ALFIN-LIKE 2 (244 aa).

Residues 137–148 (LSDRKHGRDNKS) show a composition bias toward basic and acidic residues. The segment at 137-178 (LSDRKHGRDNKSGADNGSKSRHSGKRANDVQTKTSRPAVVDD) is disordered. The segment at 187–239 (ETLCGTCGGRYNANEFWIGCDICERWFHGKCVRITPAKAEHIKHYKCPDCSSS) adopts a PHD-type zinc-finger fold.

It belongs to the Alfin family. In terms of assembly, interacts with H3K4me3 and to a lesser extent with H3K4me2.

Its subcellular location is the nucleus. Histone-binding component that specifically recognizes H3 tails trimethylated on 'Lys-4' (H3K4me3), which mark transcription start sites of virtually all active genes. The protein is PHD finger protein ALFIN-LIKE 2 of Oryza sativa subsp. indica (Rice).